A 137-amino-acid polypeptide reads, in one-letter code: Large ribosomal subunit protein uL16 (137 aa).

This sequence belongs to the universal ribosomal protein uL16 family. As to quaternary structure, part of the 50S ribosomal subunit.

Binds 23S rRNA and is also seen to make contacts with the A and possibly P site tRNAs. This is Large ribosomal subunit protein uL16 from Sorangium cellulosum (strain So ce56) (Polyangium cellulosum (strain So ce56)).